The chain runs to 247 residues: Capsid protein (247 aa).

The Bipartite nuclear localization signal signature appears at 3–20 (KRDAPWRLMAGTSKVSRS). The Nuclear localization signal motif lies at 31–45 (KRDAWVNRPMYRKPR). The Nuclear export signal signature appears at 92 to 113 (ITHRVGKRFCVKSVYILGKIWM). Positions 191-238 (RRFWKVNNNVVYNHQEAGKYENHTENALLLYMACTHASNPVYATLKIR) match the Bipartite nuclear localization signal motif.

It belongs to the geminiviridae capsid protein family. As to quaternary structure, homomultimer. Binds to single-stranded and double-stranded viral DNA. Interacts (via nuclear localization signals) with host importin alpha-1a.

Its subcellular location is the virion. It localises to the host nucleus. In terms of biological role, encapsidates the viral DNA into characteristic twinned ('geminate') particles. Binds the genomic viral ssDNA and shuttles it into and out of the cell nucleus. The CP of bipartite geminiviruses is not required for cell-to-cell or systemic movement. This is Capsid protein from Solanum lycopersicum (Tomato).